The chain runs to 208 residues: Large ribosomal subunit protein bL25 (208 aa).

The tract at residues 1-21 is disordered; that stretch reads MSNEFSLNAEKRDVQGKGASR.

The protein belongs to the bacterial ribosomal protein bL25 family. CTC subfamily. In terms of assembly, part of the 50S ribosomal subunit; part of the 5S rRNA/L5/L18/L25 subcomplex. Contacts the 5S rRNA. Binds to the 5S rRNA independently of L5 and L18.

This is one of the proteins that binds to the 5S RNA in the ribosome where it forms part of the central protuberance. The chain is Large ribosomal subunit protein bL25 from Hahella chejuensis (strain KCTC 2396).